The sequence spans 285 residues: Acetyl-coenzyme A carboxylase carboxyl transferase subunit beta (285 aa).

Positions 29–285 (IMTKCPKCKK…ILKIHQEVTK (257 aa)) constitute a CoA carboxyltransferase N-terminal domain. Zn(2+)-binding residues include cysteine 33, cysteine 36, cysteine 52, and cysteine 55. A C4-type zinc finger spans residues 33–55 (CPKCKKIMYTKELAENLNVCFNC).

This sequence belongs to the AccD/PCCB family. As to quaternary structure, acetyl-CoA carboxylase is a heterohexamer composed of biotin carboxyl carrier protein (AccB), biotin carboxylase (AccC) and two subunits each of ACCase subunit alpha (AccA) and ACCase subunit beta (AccD). Requires Zn(2+) as cofactor.

The protein localises to the cytoplasm. The enzyme catalyses N(6)-carboxybiotinyl-L-lysyl-[protein] + acetyl-CoA = N(6)-biotinyl-L-lysyl-[protein] + malonyl-CoA. Its pathway is lipid metabolism; malonyl-CoA biosynthesis; malonyl-CoA from acetyl-CoA: step 1/1. Functionally, component of the acetyl coenzyme A carboxylase (ACC) complex. Biotin carboxylase (BC) catalyzes the carboxylation of biotin on its carrier protein (BCCP) and then the CO(2) group is transferred by the transcarboxylase to acetyl-CoA to form malonyl-CoA. In Staphylococcus aureus (strain Mu3 / ATCC 700698), this protein is Acetyl-coenzyme A carboxylase carboxyl transferase subunit beta.